The chain runs to 355 residues: Mitogen-activated protein kinase (355 aa).

Positions 23–311 (YDIQDVVGEG…VEEALKHPYL (289 aa)) constitute a Protein kinase domain. ATP contacts are provided by residues 29–37 (VGEGAYGVV) and Lys-52. Asp-147 acts as the Proton acceptor in catalysis. Thr-183 is subject to Phosphothreonine. The TXY signature appears at 183-185 (TEY). Position 185 is a phosphotyrosine (Tyr-185).

It belongs to the protein kinase superfamily. CMGC Ser/Thr protein kinase family. MAP kinase subfamily. Post-translationally, dually phosphorylated on Thr-183 and Tyr-185, which activates the enzyme.

The protein localises to the nucleus. It catalyses the reaction L-seryl-[protein] + ATP = O-phospho-L-seryl-[protein] + ADP + H(+). It carries out the reaction L-threonyl-[protein] + ATP = O-phospho-L-threonyl-[protein] + ADP + H(+). With respect to regulation, activated by tyrosine and threonine phosphorylation. Functionally, responds to activation by environmental stress by phosphorylating downstream targets. The polypeptide is Mitogen-activated protein kinase (MAPK) (Fusarium vanettenii (Neocosmospora pisi)).